A 163-amino-acid polypeptide reads, in one-letter code: Biotin carboxyl carrier protein of acetyl-CoA carboxylase (163 aa).

Residues 85–161 enclose the Biotinyl-binding domain; it reads GDFIVSPLVG…QFGSKLFRIV (77 aa). At Lys127 the chain carries N6-biotinyllysine.

In terms of assembly, homodimer.

It participates in lipid metabolism; fatty acid biosynthesis. This protein is a component of the acetyl coenzyme A carboxylase complex; first, biotin carboxylase catalyzes the carboxylation of the carrier protein and then the transcarboxylase transfers the carboxyl group to form malonyl-CoA. This is Biotin carboxyl carrier protein of acetyl-CoA carboxylase (accB) from Chlamydia muridarum (strain MoPn / Nigg).